The primary structure comprises 274 residues: 2,3,4,5-tetrahydropyridine-2,6-dicarboxylate N-succinyltransferase (274 aa).

Substrate contacts are provided by Arg-106 and Asp-143.

It belongs to the transferase hexapeptide repeat family. As to quaternary structure, homotrimer.

The protein resides in the cytoplasm. The catalysed reaction is (S)-2,3,4,5-tetrahydrodipicolinate + succinyl-CoA + H2O = (S)-2-succinylamino-6-oxoheptanedioate + CoA. It participates in amino-acid biosynthesis; L-lysine biosynthesis via DAP pathway; LL-2,6-diaminopimelate from (S)-tetrahydrodipicolinate (succinylase route): step 1/3. The chain is 2,3,4,5-tetrahydropyridine-2,6-dicarboxylate N-succinyltransferase from Rickettsia rickettsii (strain Sheila Smith).